Here is a 62-residue protein sequence, read N- to C-terminus: GSTSYIYDTSAGSGTYAYIVDTGIITSHNGFNWAANDIISKSYSNYGTVLDIFAPGTSVLSS.

Residues 1 to 62 (GSTSYIYDTS…FAPGTSVLSS (62 aa)) enclose the Peptidase S8 domain. The Charge relay system role is filled by D21.

It localises to the secreted. Its activity is regulated as follows. Inhibited by phenylmethanesulfonyl fluoride (PMSF) and chymostatin (CST), but not by Bowman-Birk type trypsin-chymotrypsin inhibitor (BBI). Serine protease. May be involved in the invasion of grains and hydrolysis of grain proteins. The sequence is that of Alkaline proteinase from Fusarium culmorum.